Consider the following 880-residue polypeptide: Alanine--tRNA ligase (880 aa).

4 residues coordinate Zn(2+): histidine 566, histidine 570, cysteine 668, and histidine 672.

This sequence belongs to the class-II aminoacyl-tRNA synthetase family. The cofactor is Zn(2+).

Its subcellular location is the cytoplasm. It carries out the reaction tRNA(Ala) + L-alanine + ATP = L-alanyl-tRNA(Ala) + AMP + diphosphate. Its function is as follows. Catalyzes the attachment of alanine to tRNA(Ala) in a two-step reaction: alanine is first activated by ATP to form Ala-AMP and then transferred to the acceptor end of tRNA(Ala). Also edits incorrectly charged Ser-tRNA(Ala) and Gly-tRNA(Ala) via its editing domain. This is Alanine--tRNA ligase from Parafrankia sp. (strain EAN1pec).